Consider the following 1097-residue polypeptide: DNA-directed RNA polymerase subunit beta (1097 aa).

The tract at residues 1072–1097 (QDVNPRRSTPSRPTYESLGVADYDED) is disordered.

Belongs to the RNA polymerase beta chain family. As to quaternary structure, in cyanobacteria the RNAP catalytic core is composed of 2 alpha, 1 beta, 1 beta', 1 gamma and 1 omega subunit. When a sigma factor is associated with the core the holoenzyme is formed, which can initiate transcription.

The enzyme catalyses RNA(n) + a ribonucleoside 5'-triphosphate = RNA(n+1) + diphosphate. Its function is as follows. DNA-dependent RNA polymerase catalyzes the transcription of DNA into RNA using the four ribonucleoside triphosphates as substrates. This Parasynechococcus marenigrum (strain WH8102) protein is DNA-directed RNA polymerase subunit beta.